We begin with the raw amino-acid sequence, 217 residues long: MSLTLFDHEPQPAVWDFESRAARRGYRTIAGIDEAGRGPLAGPVVAAAVILPFGTDLPGVDDSKKLTPARRDDLFTLIQGTALAIGVGVADHKVIDRINILQATLAAMREAVECLTDPPDYLLVDGISPVPLPVAQQTIKKGDSASISIAAASIIAKVTRDRLMAEYDQLYPGYGFAEHKGYGSASHMAAIAALGPSPIHRTTFRGVREHLGESRCR.

The region spanning 27-216 (RTIAGIDEAG…VREHLGESRC (190 aa)) is the RNase H type-2 domain. 3 residues coordinate a divalent metal cation: D33, E34, and D125.

It belongs to the RNase HII family. Mn(2+) serves as cofactor. It depends on Mg(2+) as a cofactor.

It is found in the cytoplasm. It catalyses the reaction Endonucleolytic cleavage to 5'-phosphomonoester.. Endonuclease that specifically degrades the RNA of RNA-DNA hybrids. The sequence is that of Ribonuclease HII from Geobacter sulfurreducens (strain ATCC 51573 / DSM 12127 / PCA).